The chain runs to 603 residues: DNA mismatch repair protein MutL (603 aa).

Belongs to the DNA mismatch repair MutL/HexB family.

This protein is involved in the repair of mismatches in DNA. It is required for dam-dependent methyl-directed DNA mismatch repair. May act as a 'molecular matchmaker', a protein that promotes the formation of a stable complex between two or more DNA-binding proteins in an ATP-dependent manner without itself being part of a final effector complex. This chain is DNA mismatch repair protein MutL, found in Sphingopyxis alaskensis (strain DSM 13593 / LMG 18877 / RB2256) (Sphingomonas alaskensis).